A 66-amino-acid polypeptide reads, in one-letter code: Large ribosomal subunit protein bL35 (66 aa).

2 stretches are compositionally biased toward basic residues: residues 1–15 (MPKL…KRFK) and 24–40 (HAQR…TKKQ). The segment at 1 to 40 (MPKLKTKSGAKKRFKVTGTGKVMHAQRGKRHGMIKRTKKQ) is disordered.

Belongs to the bacterial ribosomal protein bL35 family.

The sequence is that of Large ribosomal subunit protein bL35 from Bradyrhizobium sp. (strain ORS 278).